We begin with the raw amino-acid sequence, 419 residues long: Thymidine phosphorylase (419 aa).

Belongs to the thymidine/pyrimidine-nucleoside phosphorylase family. As to quaternary structure, homodimer.

It catalyses the reaction thymidine + phosphate = 2-deoxy-alpha-D-ribose 1-phosphate + thymine. In terms of biological role, the enzymes which catalyze the reversible phosphorolysis of pyrimidine nucleosides are involved in the degradation of these compounds and in their utilization as carbon and energy sources, or in the rescue of pyrimidine bases for nucleotide synthesis. The chain is Thymidine phosphorylase (deoA) from Mycoplasmoides pirum (Mycoplasma pirum).